Reading from the N-terminus, the 286-residue chain is Homoserine kinase (286 aa).

78–88 (PLARGLGSSSS) lines the ATP pocket.

Belongs to the GHMP kinase family. Homoserine kinase subfamily.

It localises to the cytoplasm. The enzyme catalyses L-homoserine + ATP = O-phospho-L-homoserine + ADP + H(+). Its pathway is amino-acid biosynthesis; L-threonine biosynthesis; L-threonine from L-aspartate: step 4/5. In terms of biological role, catalyzes the ATP-dependent phosphorylation of L-homoserine to L-homoserine phosphate. The protein is Homoserine kinase of Streptococcus suis (strain 98HAH33).